The chain runs to 322 residues: Mas-related G-protein coupled receptor member X3 (322 aa).

Over 1–31 (MDPTIPALGTSQTPINRREETPCYKQTLSLT) the chain is Extracellular. A helical transmembrane segment spans residues 32-52 (VLTCIISLVGLTGNAVVLWLL). The Cytoplasmic segment spans residues 53-60 (GFRMRRNA). Residues 61-81 (VSTYILNLAAVDFLFLSGHIV) traverse the membrane as a helical segment. Over 82–96 (RSPLRLISIRHPISK) the chain is Extracellular. The helical transmembrane segment at 97-117 (IVNPVMTFPYFIGLSMLSAIS) threads the bilayer. The Cytoplasmic segment spans residues 118–139 (TERCLSVLWPMWYRCRRPRHLS). A helical transmembrane segment spans residues 140-160 (VVVCVLLWALSLLRSILEWMF). Residues 161–177 (CDFLFSGADSVWCETSD) lie on the Extracellular side of the membrane. A helical membrane pass occupies residues 178-198 (FITIAWLIFLCVVLCGSSLVL). Residues 199-213 (LVRILCGSRKMPLTR) lie on the Cytoplasmic side of the membrane. Residues 214–234 (LYVTILLTVLVFLLCGLPFGI) form a helical membrane-spanning segment. Residues 235–254 (QWALFSRIHLDWKVLFCHVH) lie on the Extracellular side of the membrane. Residues 255–275 (LISVFLSSLNSSANPIIYFFV) form a helical membrane-spanning segment. Residues 276-322 (GSFRQRQNRQNLKLVLQRALQDTPEVDEGGGRLPEETLELSVSRLEQ) are Cytoplasmic-facing.

It belongs to the G-protein coupled receptor 1 family. Mas subfamily.

It localises to the cell membrane. In terms of biological role, orphan receptor. Probably involved in the function of nociceptive neurons. May regulate nociceptor function and/or development, including the sensation or modulation of pain. Potently activated by enkephalins. In Macaca mulatta (Rhesus macaque), this protein is Mas-related G-protein coupled receptor member X3 (MRGPRX3).